Consider the following 498-residue polypeptide: ATP synthase subunit beta, chloroplastic (498 aa).

172-179 contributes to the ATP binding site; the sequence is GGAGVGKT.

The protein belongs to the ATPase alpha/beta chains family. In terms of assembly, F-type ATPases have 2 components, CF(1) - the catalytic core - and CF(0) - the membrane proton channel. CF(1) has five subunits: alpha(3), beta(3), gamma(1), delta(1), epsilon(1). CF(0) has four main subunits: a(1), b(1), b'(1) and c(9-12).

It is found in the plastid. It localises to the chloroplast thylakoid membrane. The enzyme catalyses ATP + H2O + 4 H(+)(in) = ADP + phosphate + 5 H(+)(out). Its function is as follows. Produces ATP from ADP in the presence of a proton gradient across the membrane. The catalytic sites are hosted primarily by the beta subunits. This chain is ATP synthase subunit beta, chloroplastic, found in Coffea arabica (Arabian coffee).